We begin with the raw amino-acid sequence, 592 residues long: Aspartate--tRNA(Asp/Asn) ligase (592 aa).

E175 provides a ligand contact to L-aspartate. The aspartate stretch occupies residues 199–202 (QLFK). R221 lines the L-aspartate pocket. ATP is bound by residues 221–223 (RDE) and Q230. H450 serves as a coordination point for L-aspartate. E483 contacts ATP. R490 contributes to the L-aspartate binding site. 535–538 (GLDR) contacts ATP.

The protein belongs to the class-II aminoacyl-tRNA synthetase family. Type 1 subfamily. As to quaternary structure, homodimer.

The protein localises to the cytoplasm. The catalysed reaction is tRNA(Asx) + L-aspartate + ATP = L-aspartyl-tRNA(Asx) + AMP + diphosphate. Functionally, aspartyl-tRNA synthetase with relaxed tRNA specificity since it is able to aspartylate not only its cognate tRNA(Asp) but also tRNA(Asn). Reaction proceeds in two steps: L-aspartate is first activated by ATP to form Asp-AMP and then transferred to the acceptor end of tRNA(Asp/Asn). This is Aspartate--tRNA(Asp/Asn) ligase from Acinetobacter baylyi (strain ATCC 33305 / BD413 / ADP1).